We begin with the raw amino-acid sequence, 420 residues long: UDP-N-acetylglucosamine 1-carboxyvinyltransferase (420 aa).

Position 22–23 (22–23 (KN)) interacts with phosphoenolpyruvate. Arg-92 is a binding site for UDP-N-acetyl-alpha-D-glucosamine. The active-site Proton donor is Cys-116. Cys-116 bears the 2-(S-cysteinyl)pyruvic acid O-phosphothioketal mark. UDP-N-acetyl-alpha-D-glucosamine contacts are provided by Asp-306 and Ile-328.

Belongs to the EPSP synthase family. MurA subfamily.

It localises to the cytoplasm. It catalyses the reaction phosphoenolpyruvate + UDP-N-acetyl-alpha-D-glucosamine = UDP-N-acetyl-3-O-(1-carboxyvinyl)-alpha-D-glucosamine + phosphate. It functions in the pathway cell wall biogenesis; peptidoglycan biosynthesis. In terms of biological role, cell wall formation. Adds enolpyruvyl to UDP-N-acetylglucosamine. This Blochmanniella floridana protein is UDP-N-acetylglucosamine 1-carboxyvinyltransferase.